Consider the following 333-residue polypeptide: 4-hydroxy-3-methylbut-2-enyl diphosphate reductase (333 aa).

C34 serves as a coordination point for [4Fe-4S] cluster. (2E)-4-hydroxy-3-methylbut-2-enyl diphosphate contacts are provided by H63 and H96. Positions 63 and 96 each coordinate dimethylallyl diphosphate. Residues H63 and H96 each contribute to the isopentenyl diphosphate site. C118 lines the [4Fe-4S] cluster pocket. H146 serves as a coordination point for (2E)-4-hydroxy-3-methylbut-2-enyl diphosphate. H146 provides a ligand contact to dimethylallyl diphosphate. H146 is an isopentenyl diphosphate binding site. E148 functions as the Proton donor in the catalytic mechanism. Residue T186 participates in (2E)-4-hydroxy-3-methylbut-2-enyl diphosphate binding. C216 is a binding site for [4Fe-4S] cluster. (2E)-4-hydroxy-3-methylbut-2-enyl diphosphate is bound by residues S244, S245, N246, and S289. The dimethylallyl diphosphate site is built by S244, S245, N246, and S289. Residues S244, S245, N246, and S289 each coordinate isopentenyl diphosphate.

This sequence belongs to the IspH family. [4Fe-4S] cluster serves as cofactor.

It carries out the reaction isopentenyl diphosphate + 2 oxidized [2Fe-2S]-[ferredoxin] + H2O = (2E)-4-hydroxy-3-methylbut-2-enyl diphosphate + 2 reduced [2Fe-2S]-[ferredoxin] + 2 H(+). The catalysed reaction is dimethylallyl diphosphate + 2 oxidized [2Fe-2S]-[ferredoxin] + H2O = (2E)-4-hydroxy-3-methylbut-2-enyl diphosphate + 2 reduced [2Fe-2S]-[ferredoxin] + 2 H(+). It functions in the pathway isoprenoid biosynthesis; dimethylallyl diphosphate biosynthesis; dimethylallyl diphosphate from (2E)-4-hydroxy-3-methylbutenyl diphosphate: step 1/1. It participates in isoprenoid biosynthesis; isopentenyl diphosphate biosynthesis via DXP pathway; isopentenyl diphosphate from 1-deoxy-D-xylulose 5-phosphate: step 6/6. In terms of biological role, catalyzes the conversion of 1-hydroxy-2-methyl-2-(E)-butenyl 4-diphosphate (HMBPP) into a mixture of isopentenyl diphosphate (IPP) and dimethylallyl diphosphate (DMAPP). Acts in the terminal step of the DOXP/MEP pathway for isoprenoid precursor biosynthesis. The sequence is that of 4-hydroxy-3-methylbut-2-enyl diphosphate reductase from Mycobacterium sp. (strain KMS).